A 162-amino-acid polypeptide reads, in one-letter code: Neuritin-like protein (162 aa).

A signal peptide spans 1 to 32 (MMCNCCHCHWRRRCQRLPCALTLLLLLPLAVA). A lipid anchor (GPI-anchor amidated alanine) is attached at A136. The propeptide at 137–162 (PALAPAPAPVLLAAALALACLLGPLA) is removed in mature form.

Belongs to the neuritin family.

The protein localises to the cell membrane. The polypeptide is Neuritin-like protein (Nrn1l) (Mus musculus (Mouse)).